A 133-amino-acid chain; its full sequence is Small ribosomal subunit protein uS8 (133 aa).

This sequence belongs to the universal ribosomal protein uS8 family. As to quaternary structure, part of the 30S ribosomal subunit. Contacts proteins S5 and S12.

Functionally, one of the primary rRNA binding proteins, it binds directly to 16S rRNA central domain where it helps coordinate assembly of the platform of the 30S subunit. The sequence is that of Small ribosomal subunit protein uS8 from Orientia tsutsugamushi (strain Boryong) (Rickettsia tsutsugamushi).